A 132-amino-acid chain; its full sequence is Small ribosomal subunit protein bS16 (132 aa).

Residues 82 to 107 (DSKVQSKKEHNANKVKKEVKKPEAKK) are compositionally biased toward basic and acidic residues. Residues 82 to 132 (DSKVQSKKEHNANKVKKEVKKPEAKKAAASKPASKPSASKSASQKKTVSKK) form a disordered region. Low complexity predominate over residues 108–132 (AAASKPASKPSASKSASQKKTVSKK).

Belongs to the bacterial ribosomal protein bS16 family.

This Malacoplasma penetrans (strain HF-2) (Mycoplasma penetrans) protein is Small ribosomal subunit protein bS16.